We begin with the raw amino-acid sequence, 311 residues long: NAD kinase (311 aa).

The Proton acceptor role is filled by Asp-88. Residues 88-89 (DG), 162-163 (NE), Arg-190, Asp-192, Val-200, and 203-208 (TAHNLS) contribute to the NAD(+) site.

Belongs to the NAD kinase family. A divalent metal cation serves as cofactor.

It is found in the cytoplasm. It catalyses the reaction NAD(+) + ATP = ADP + NADP(+) + H(+). Functionally, involved in the regulation of the intracellular balance of NAD and NADP, and is a key enzyme in the biosynthesis of NADP. Catalyzes specifically the phosphorylation on 2'-hydroxyl of the adenosine moiety of NAD to yield NADP. The polypeptide is NAD kinase (Rhodopirellula baltica (strain DSM 10527 / NCIMB 13988 / SH1)).